A 237-amino-acid chain; its full sequence is Placenta-expressed transcript 1 protein (237 aa).

The first 27 residues, 1–27 (MLSLRSLLPHLGLFLCLALHLSPSLSA), serve as a signal peptide directing secretion. N-linked (GlcNAc...) asparagine glycans are attached at residues asparagine 30, asparagine 67, asparagine 103, and asparagine 136. The span at 145–162 (KMEQVQPSASTPIPESSE) shows a compositional bias: polar residues. Residues 145 to 170 (KMEQVQPSASTPIPESSETSQTINTT) are disordered. Serine 218 carries GPI-anchor amidated serine lipidation. A propeptide spans 219 to 237 (PLAGALHILLVFLISKLLF) (removed in mature form).

In terms of processing, N-glycosylated. Post-translationally, GPI-anchored. Present in hair follicle cells and sebaceous gland of skin, ciliated epithelial cells of trachea and bronchial tube, striated portion of submandibular gland, distal convoluted tubule cells of kidney, ciliated epithelial cells of oviduct, medulla of adrenal gland and anterior lobe of pituitary gland. Expressed in keratinocytes of the hair follicle at the trichilemmal zone corresponding to the terminally differentiated outermost suprabasal outer root sheath (ORS), including that of the sebaceous gland duct (SGD) and the directly adjacent upper distal end of the companion layer (CL). Expression is similar in all hair follicle growth stages. Also detected during both the early and late anagen phases above the bulge of stem cells. Expressed at the leading edge of the epidermal wound. Not expressed in the interfollicular epidermis (IFE), inner root sheath (IRS) and hair fiber. Highly expressed in placenta. Detected in mammary and prostate epithelia and in the pancreas (at protein level).

The protein localises to the apical cell membrane. Modulates leading keratinocyte migration and cellular adhesion to matrix proteins during a wound-healing response and promotes wound repair. May play a role during trichilemmal differentiation of the hair follicle. In Mus musculus (Mouse), this protein is Placenta-expressed transcript 1 protein (Plet1).